The following is a 77-amino-acid chain: MCCINYYSIEYGCTVSGAYKKQTKLVSAWSLGSIIMRLTLIFWLLLLWCGFHLAALCIAIILFLLLLSAIDELNGWD.

This is an uncharacterized protein from Bos taurus (Bovine).